Consider the following 129-residue polypeptide: UPF0325 protein HCH_00487 (129 aa).

It belongs to the UPF0325 family.

The chain is UPF0325 protein HCH_00487 from Hahella chejuensis (strain KCTC 2396).